The following is a 354-amino-acid chain: Photosystem II protein D1 (354 aa).

T2 is modified (N-acetylthreonine). T2 carries the post-translational modification Phosphothreonine. 3 helical membrane-spanning segments follow: residues 29-46 (YIGW…TATS), 118-133 (HFLL…EWEL), and 142-156 (WIAV…AATA). H118 contacts chlorophyll a. Y126 is a pheophytin a binding site. [CaMn4O5] cluster-binding residues include D170 and E189. The helical transmembrane segment at 197–218 (FHMLGVAGVFGGSLFSAMHGSL) threads the bilayer. Residue H198 coordinates chlorophyll a. A quinone contacts are provided by residues H215 and 264–265 (SF). H215 contributes to the Fe cation binding site. H272 contributes to the Fe cation binding site. A helical membrane pass occupies residues 274–288 (FLAAWPVVGIWFTAL). Residues H332, E333, D342, and A344 each contribute to the [CaMn4O5] cluster site. Residues 345–354 (ASIEAPSLNG) constitute a propeptide that is removed on maturation.

It belongs to the reaction center PufL/M/PsbA/D family. PSII is composed of 1 copy each of membrane proteins PsbA, PsbB, PsbC, PsbD, PsbE, PsbF, PsbH, PsbI, PsbJ, PsbK, PsbL, PsbM, PsbT, PsbX, PsbY, PsbZ, Psb30/Ycf12, at least 3 peripheral proteins of the oxygen-evolving complex and a large number of cofactors. It forms dimeric complexes. Requires The D1/D2 heterodimer binds P680, chlorophylls that are the primary electron donor of PSII, and subsequent electron acceptors. It shares a non-heme iron and each subunit binds pheophytin, quinone, additional chlorophylls, carotenoids and lipids. D1 provides most of the ligands for the Mn4-Ca-O5 cluster of the oxygen-evolving complex (OEC). There is also a Cl(-1) ion associated with D1 and D2, which is required for oxygen evolution. The PSII complex binds additional chlorophylls, carotenoids and specific lipids. as cofactor. Tyr-161 forms a radical intermediate that is referred to as redox-active TyrZ, YZ or Y-Z. Post-translationally, C-terminally processed by CTPA; processing is essential to allow assembly of the oxygen-evolving complex and thus photosynthetic growth.

The protein resides in the plastid. It is found in the chloroplast thylakoid membrane. The enzyme catalyses 2 a plastoquinone + 4 hnu + 2 H2O = 2 a plastoquinol + O2. In terms of biological role, photosystem II (PSII) is a light-driven water:plastoquinone oxidoreductase that uses light energy to abstract electrons from H(2)O, generating O(2) and a proton gradient subsequently used for ATP formation. It consists of a core antenna complex that captures photons, and an electron transfer chain that converts photonic excitation into a charge separation. The D1/D2 (PsbA/PsbD) reaction center heterodimer binds P680, the primary electron donor of PSII as well as several subsequent electron acceptors. The polypeptide is Photosystem II protein D1 (Selaginella uncinata (Blue spike-moss)).